The sequence spans 369 residues: Uroporphyrinogen decarboxylase (369 aa).

Coproporphyrinogen I-binding residues include Arg39, Ala41, Arg43, Arg52, Asp88, Tyr166, Ser221, and His341. Positions 39, 41, and 43 each coordinate coproporphyrinogen III. Residues Asp88, Tyr166, Ser221, and His341 each coordinate coproporphyrinogen III.

It belongs to the uroporphyrinogen decarboxylase family. As to quaternary structure, homodimer.

Its subcellular location is the cytoplasm. The protein localises to the cytosol. It carries out the reaction uroporphyrinogen III + 4 H(+) = coproporphyrinogen III + 4 CO2. It catalyses the reaction uroporphyrinogen I + 4 H(+) = coproporphyrinogen I + 4 CO2. The protein operates within porphyrin-containing compound metabolism; protoporphyrin-IX biosynthesis; coproporphyrinogen-III from 5-aminolevulinate: step 4/4. Its function is as follows. Catalyzes the sequential decarboxylation of the four acetate side chains of uroporphyrinogen to form coproporphyrinogen and participates in the fifth step in the heme biosynthetic pathway. Isomer I or isomer III of uroporphyrinogen may serve as substrate, but only coproporphyrinogen III can ultimately be converted to heme. In vitro also decarboxylates pentacarboxylate porphyrinogen I. The chain is Uroporphyrinogen decarboxylase from Danio rerio (Zebrafish).